Reading from the N-terminus, the 215-residue chain is Adenylate kinase (215 aa).

ATP is bound at residue 10-15 (GAGKGT). Positions 30–59 (STGDMLRAAVKAGSPLGLKVKGVMDSGGLV) are NMP. AMP is bound by residues Thr31, Arg36, 57-59 (GLV), 85-88 (GFPR), and Gln92. The tract at residues 122–159 (GRRVHAASGRVYHDLHNPPKVAGKDDETGEDLIQREDD) is LID. Residues Arg123 and 132–133 (VY) contribute to the ATP site. Residues Arg156 and Arg167 each coordinate AMP. An ATP-binding site is contributed by Gly201.

The protein belongs to the adenylate kinase family. As to quaternary structure, monomer.

The protein localises to the cytoplasm. It catalyses the reaction AMP + ATP = 2 ADP. The protein operates within purine metabolism; AMP biosynthesis via salvage pathway; AMP from ADP: step 1/1. Its function is as follows. Catalyzes the reversible transfer of the terminal phosphate group between ATP and AMP. Plays an important role in cellular energy homeostasis and in adenine nucleotide metabolism. This Azotobacter vinelandii (strain DJ / ATCC BAA-1303) protein is Adenylate kinase.